The following is a 342-amino-acid chain: MKRAFSSQLRSAYPASKSTHFGRVMASSGSEAKANYAPISTNEPVVSVDWLHSNLGDADIKVLDASWYMAHEQRNPIQEYQVAHIPGALFFDLNGIADRKTNLRHMLPSEEAFAAGCSALGIENNDGVVVYDGMGLFSAARVWWMFRVFGHDKVWVLDGGLPKWRASGYDVESSVSNDAILKASAATEAIEKIYQGQTISPITFQTKFRPHLVLALDQVKENIEDKTYQHIDARSKARFDGIAPEPWKGLPSGHIPGSKCVPFPLMFDSSQTLLPAEELKKQFEQEDISLDSPIAASCGTGVTACILALGLYRLGKTNVAIYDGSWTEWATAPNLPIVGSSS.

2 consecutive Rhodanese domains span residues 56 to 173 (GDAD…DVES) and 224 to 338 (EDKT…LPIV). C298 serves as the catalytic Cysteine persulfide intermediate.

Expressed in roots, rosette and cauline leaves, stems, flowers and siliques.

It is found in the cytoplasm. The catalysed reaction is thiosulfate + hydrogen cyanide = thiocyanate + sulfite + 2 H(+). The enzyme catalyses 2-oxo-3-sulfanylpropanoate + [thioredoxin]-dithiol = [thioredoxin]-disulfide + hydrogen sulfide + pyruvate + H(+). Its function is as follows. Catalyzes the transfer of a sulfur ion from a donor to cyanide or to other thiol compounds. Substrate preference is 3-mercaptopyruvate &gt; thiosulfate. Involved in embryo and seed development. In Arabidopsis thaliana (Mouse-ear cress), this protein is Thiosulfate/3-mercaptopyruvate sulfurtransferase 2 (STR2).